Reading from the N-terminus, the 236-residue chain is H2HPP isomerase (236 aa).

2 consecutive Cupin type-1 domains span residues 40 to 106 (YVPP…AIDI) and 151 to 215 (NIPG…SKSV). Residues histidine 50, histidine 52, glutamine 56, histidine 91, histidine 162, histidine 164, glutamine 168, and histidine 202 each contribute to the a divalent metal cation site. Position 223 (tyrosine 223) interacts with substrate.

Monomer. Fe(2+) serves as cofactor. Co(2+) is required as a cofactor.

Its subcellular location is the cytoplasm. It catalyses the reaction 3-[(4R)-4-hydroxycyclohexa-1,5-dien-1-yl]-2-oxopropanoate = 3-[(1E,4R)-4-hydroxycyclohex-2-en-1-ylidene]pyruvate. It participates in antibiotic biosynthesis; bacilysin biosynthesis. In terms of biological role, part of the bacABCDEF operon responsible for the biosynthesis of the nonribosomally synthesized dipeptide antibiotic bacilysin, composed of L-alanine and L-anticapsin. Bacilysin is an irreversible inactivator of the glutaminase domain of glucosamine synthetase. BacB catalyzes the allylic isomerization of the endocyclic-delta(4),delta(8)-7R-dihydro-hydroxyphenylpyruvate (en-H2HPP) to generate a mixture of 3E,7R- and 3Z, 7R-olefins of the exocyclic-delta(3),delta(5)-dihydro-hydroxyphenylpyruvate (ex-H2HPP). In Bacillus subtilis, this protein is H2HPP isomerase.